The chain runs to 96 residues: Protein RnfH (96 aa).

It belongs to the UPF0125 (RnfH) family.

This is Protein RnfH from Cronobacter sakazakii (strain ATCC BAA-894) (Enterobacter sakazakii).